A 94-amino-acid chain; its full sequence is MLQPIGDRVIVKVKDEEEEKVGGIVLASNAKEKPQMGEIIAVGNGKRNANGDLIPMSVAKGETVFFDKYSGTNLKYEGEKYLVLRESDLLAVVK.

It belongs to the GroES chaperonin family. Heptamer of 7 subunits arranged in a ring. Interacts with the chaperonin GroEL.

The protein localises to the cytoplasm. Together with the chaperonin GroEL, plays an essential role in assisting protein folding. The GroEL-GroES system forms a nano-cage that allows encapsulation of the non-native substrate proteins and provides a physical environment optimized to promote and accelerate protein folding. GroES binds to the apical surface of the GroEL ring, thereby capping the opening of the GroEL channel. This Lactobacillus gasseri (strain ATCC 33323 / DSM 20243 / BCRC 14619 / CIP 102991 / JCM 1131 / KCTC 3163 / NCIMB 11718 / NCTC 13722 / AM63) protein is Co-chaperonin GroES.